A 459-amino-acid chain; its full sequence is Tubulin gamma chain (459 aa).

Position 142-148 (142-148) interacts with GTP; the sequence is AGGTGSG. Residues 440 to 459 are disordered; it reads ADYLTKETAPTDEAEDKRAG.

The protein belongs to the tubulin family.

It localises to the cytoplasm. Its subcellular location is the cytoskeleton. It is found in the microtubule organizing center. The protein resides in the spindle pole body. Tubulin is the major constituent of microtubules. The gamma chain is found at microtubule organizing centers (MTOC) such as the spindle poles or the centrosome, suggesting that it is involved in the minus-end nucleation of microtubule assembly. The polypeptide is Tubulin gamma chain (TUB4) (Cochliobolus heterostrophus (strain C5 / ATCC 48332 / race O) (Southern corn leaf blight fungus)).